The sequence spans 54 residues: MDKVELSDLSFNKDWSFYLLAHREFVPTATDKYACRVSHITLKEPKVVTWERDM.

Residues 3 to 41 form the Ig-like C1-type domain; sequence KVELSDLSFNKDWSFYLLAHREFVPTATDKYACRVSHIT.

It belongs to the beta-2-microglobulin family. Heterodimer of an alpha chain and a beta chain. Beta-2-microglobulin is the beta-chain of major histocompatibility complex class I molecules.

It localises to the secreted. In terms of biological role, component of the class I major histocompatibility complex (MHC). Involved in the presentation of peptide antigens to the immune system. This is Beta-2-microglobulin (B2M) from Mesocricetus auratus (Golden hamster).